We begin with the raw amino-acid sequence, 323 residues long: Calcium homeostasis modulator protein 2 (323 aa).

At 1-21 the chain is on the cytoplasmic side; sequence MAALIAENFRFLSLFFKSKDV. The central pore stretch occupies residues 14–39; the sequence is LFFKSKDVMIFNGLVALGTVGSQELF. Residues 22–43 traverse the membrane as a helical segment; it reads MIFNGLVALGTVGSQELFSVVA. Topologically, residues 44–52 are extracellular; the sequence is FHCPCSPAR. 2 cysteine pairs are disulfide-bonded: cysteine 46/cysteine 130 and cysteine 48/cysteine 162. The chain crosses the membrane as a helical span at residues 53-76; that stretch reads NYLYGLTAIGVPALALFLIGVILN. Residues 77 to 101 are Cytoplasmic-facing; sequence NHTWNLVAECQYRRAKNCSAAPNFL. The helical transmembrane segment at 102–132 threads the bilayer; the sequence is LLSSILGRAAVAPVTWSVISLLRGEAYVCAL. The Extracellular portion of the chain corresponds to 133–179; it reads SEFVDPSSLTAGDKGFPPAHATEVLARFPCGEGPANLSSFREEVSRR. The hemichannel docking stretch occupies residues 145–152; that stretch reads DKGFPPAH. Residues 180-206 form a helical membrane-spanning segment; it reads LKYESQLFGWLLIGVVAILVFLTKCLK. Residues 207–323 lie on the Cytoplasmic side of the membrane; sequence HYCSPLSYRQ…DNVEMALLTA (117 aa). Residues 214–251 are intersubunit interaction; the sequence is YRQEAYWAQYRTNEDQLFQRTAEVHSRVLAANNVRRFF.

Belongs to the CALHM family. Homo-undecamer. Two undecameric hemichannels can assemble in a head-to-head manner to form a gap junction. Neuron, astrocyte, and microglia.

It localises to the cell membrane. The enzyme catalyses ATP(in) = ATP(out). Its activity is regulated as follows. Inhibited by divalent cations such as Co(2+) and Ni(2+). In terms of biological role, pore-forming subunit of Ca(2+) homeostasis modulator channels. Mediates ATP release from astrocytes and ATP-induced Ca(2+) influx in microglia thus regulating neuronal ATP and Ca(2+) homeostasis, synaptic transmission and neuroinflammatory response. May form intercellular gap junctions. The gating mechanism remains unknown. This Mus musculus (Mouse) protein is Calcium homeostasis modulator protein 2.